A 141-amino-acid chain; its full sequence is ATP synthase epsilon chain (141 aa).

It belongs to the ATPase epsilon chain family. In terms of assembly, F-type ATPases have 2 components, CF(1) - the catalytic core - and CF(0) - the membrane proton channel. CF(1) has five subunits: alpha(3), beta(3), gamma(1), delta(1), epsilon(1). CF(0) has three main subunits: a, b and c.

The protein localises to the cell inner membrane. Functionally, produces ATP from ADP in the presence of a proton gradient across the membrane. This chain is ATP synthase epsilon chain, found in Paraburkholderia phymatum (strain DSM 17167 / CIP 108236 / LMG 21445 / STM815) (Burkholderia phymatum).